Consider the following 210-residue polypeptide: Orotate phosphoribosyltransferase (210 aa).

5-phospho-alpha-D-ribose 1-diphosphate contacts are provided by residues R96, K100, H102, and 122 to 130 (EDLISTGGS). Position 126 (S126) interacts with orotate.

It belongs to the purine/pyrimidine phosphoribosyltransferase family. PyrE subfamily. As to quaternary structure, homodimer. Requires Mg(2+) as cofactor.

The enzyme catalyses orotidine 5'-phosphate + diphosphate = orotate + 5-phospho-alpha-D-ribose 1-diphosphate. Its pathway is pyrimidine metabolism; UMP biosynthesis via de novo pathway; UMP from orotate: step 1/2. Its function is as follows. Catalyzes the transfer of a ribosyl phosphate group from 5-phosphoribose 1-diphosphate to orotate, leading to the formation of orotidine monophosphate (OMP). The sequence is that of Orotate phosphoribosyltransferase from Streptococcus pneumoniae serotype 4 (strain ATCC BAA-334 / TIGR4).